Reading from the N-terminus, the 342-residue chain is S-adenosylmethionine:tRNA ribosyltransferase-isomerase (342 aa).

This sequence belongs to the QueA family. As to quaternary structure, monomer.

The protein localises to the cytoplasm. It catalyses the reaction 7-aminomethyl-7-carbaguanosine(34) in tRNA + S-adenosyl-L-methionine = epoxyqueuosine(34) in tRNA + adenine + L-methionine + 2 H(+). The protein operates within tRNA modification; tRNA-queuosine biosynthesis. Transfers and isomerizes the ribose moiety from AdoMet to the 7-aminomethyl group of 7-deazaguanine (preQ1-tRNA) to give epoxyqueuosine (oQ-tRNA). The polypeptide is S-adenosylmethionine:tRNA ribosyltransferase-isomerase (Streptococcus agalactiae serotype V (strain ATCC BAA-611 / 2603 V/R)).